Consider the following 441-residue polypeptide: N-acetyl-S-(2-succino)cysteine monooxygenase (441 aa).

Positions 59, 96, 146, 150, 220, and 221 each coordinate FMN.

Belongs to the NtaA/SnaA/DszA monooxygenase family. In terms of assembly, homodimer. Requires FMN as cofactor.

The catalysed reaction is N-acetyl-S-(2-succino)-L-cysteine + NADH + O2 + H(+) = N-acetyl-L-cysteine + oxaloacetate + NAD(+) + H2O. The protein operates within amino-acid biosynthesis; L-cysteine biosynthesis. In terms of biological role, catalyzes the oxidative cleavage of the C-S bond of N-acetyl-S-(2-succino)cysteine, forming oxaloacetate and N-acetylcysteine (NAC). Is involved in a S-(2-succino)cysteine (2SC) degradation pathway that allows B.subtilis to grow on 2SC as a sole sulfur source, via its metabolization to cysteine. Shows almost no activity on S-succinylglutathione and 2SC. In Bacillus subtilis (strain 168), this protein is N-acetyl-S-(2-succino)cysteine monooxygenase.